The sequence spans 290 residues: 7-methylguanosine phosphate-specific 5'-nucleotidase A (290 aa).

Aspartate 39 acts as the Nucleophile in catalysis. The Mg(2+) site is built by aspartate 39 and aspartate 41. Aspartate 41 (proton donor) is an active-site residue. Glutamate 86 is a binding site for CMP. Glutamate 86 contributes to the N(7)-methyl-GMP binding site. Residues 154 to 155 (SA) and lysine 203 contribute to the substrate site. Aspartate 228 provides a ligand contact to Mg(2+).

The protein belongs to the pyrimidine 5'-nucleotidase family. In terms of assembly, monomer.

Its subcellular location is the cytoplasm. It carries out the reaction N(7)-methyl-GMP + H2O = N(7)-methylguanosine + phosphate. It catalyses the reaction CMP + H2O = cytidine + phosphate. The catalysed reaction is a ribonucleoside 5'-phosphate + H2O = a ribonucleoside + phosphate. Specifically hydrolyzes 7-methylguanosine monophosphate (m(7)GMP) to 7-methylguanosine and inorganic phosphate. The specific activity for m(7)GMP may protect cells against undesired salvage of m(7)GMP and its incorporation into nucleic acids. Also has weak activity for CMP. UMP and purine nucleotides are poor substrates. This chain is 7-methylguanosine phosphate-specific 5'-nucleotidase A (Nt5c3b-a), found in Xenopus laevis (African clawed frog).